A 626-amino-acid polypeptide reads, in one-letter code: Basic helix-loop-helix ARNT-like protein 1 (626 aa).

Positions 1 to 58 (MADQRMDISSTISDFMSPGPTDLLSSSLGTSGVDCNRKRKGSATDYQESMDTDKDDPH) are disordered. At serine 17 the chain carries Phosphoserine; by GSK3-beta. Low complexity predominate over residues 17-32 (SPGPTDLLSSSLGTSG). Position 21 is a phosphothreonine; by GSK3-beta (threonine 21). Positions 36-41 (NRKRKG) match the Nuclear localization signal motif. The bHLH domain occupies 72-125 (NAREAHSQIEKRRRDKMNSFIDELASLVPTCNAMSRKLDKLTVLRMAVQHMKTL). Serine 78 bears the Phosphoserine mark. A Phosphoserine; by CK2 modification is found at serine 90. The short motif at 142–152 (LSDDELKHLIL) is the Nuclear export signal 1 element. The region spanning 143–215 (SDDELKHLIL…EQLSSSDTAP (73 aa)) is the PAS 1 domain. Lysine 252 is covalently cross-linked (Glycyl lysine isopeptide (Lys-Gly) (interchain with G-Cter in SUMO2 and SUMO3)). Lysine 259 participates in a covalent cross-link: Glycyl lysine isopeptide (Lys-Gly) (interchain with G-Cter in SUMO); alternate. A Glycyl lysine isopeptide (Lys-Gly) (interchain with G-Cter in SUMO2); alternate cross-link involves residue lysine 259. The 71-residue stretch at 326-396 (PQPVNGEIRV…ECHRQVLQTR (71 aa)) folds into the PAS 2 domain. The Nuclear export signal 2 signature appears at 361–369 (LAYLPQELL). Positions 401-444 (TNCYKFKIKDGSFITLRSRWFSFMNPWTKEVEYIVSTNTVVLAN) constitute a PAC domain. Disordered regions lie at residues 459-492 (SPHS…RAGA) and 511-595 (GSSP…SPSN). The segment at 508 to 588 (RIRGSSPSSC…IGIDMIDNDQ (81 aa)) is interaction with CIART. Residues 511-521 (GSSPSSCGSSP) show a composition bias toward low complexity. Lysine 538 is modified (N6-acetyllysine).

Component of the circadian clock oscillator which includes the CRY1/2 proteins, CLOCK or NPAS2, BMAL1 or BMAL2, CSNK1D and/or CSNK1E, TIMELESS and the PER1/2/3 proteins. Forms a heterodimer with CLOCK. The CLOCK-BMAL1 heterodimer is required for E-box-dependent transactivation, for CLOCK nuclear translocation and degradation, and, for phosphorylation of both CLOCK and BMAL1. Part of a nuclear complex which also includes RACK1 and PRKCA; RACK1 and PRKCA are recruited to the complex in a circadian manner. Interacts with NPAS2. Interacts with EZH2. Interacts with SUMO3. Interacts with SIRT1. Interacts with AHR. Interacts with ID1, ID2 and ID3. Interacts with DDX4. Interacts with OGT. Interacts with EED and SUZ12. Interacts with MTA1. Interacts with CIART. Interacts with HSP90. Interacts with KAT2B and EP300. Interacts with BHLHE40/DEC1 and BHLHE41/DEC2. Interacts with RELB and the interaction is enhanced in the presence of CLOCK. Interacts with PER1, PER2, CRY1 and CRY2 and this interaction requires a translocation to the nucleus. Interaction of the CLOCK-BMAL1 heterodimer with PER or CRY inhibits transcription activation. Interaction of the CLOCK-BMAL1 with CRY1 is independent of DNA but with PER2 is off DNA. The CLOCK-BMAL1 heterodimer interacts with GSK3B. Interacts with KDM5A. Interacts with KMT2A; in a circadian manner. Interacts with UBE3A. Interacts with PRKCG. Interacts with MAGEL2. Interacts with NCOA2. Interacts with THRAP3. The CLOCK-BMAL1 heterodimer interacts with PASD1. Interacts with PASD1. Interacts with USP9X. Interacts with PIWIL2 (via PIWI domain). Interacts with HDAC3. Interacts with HNF4A. In terms of processing, ubiquitinated, leading to its proteasomal degradation. Deubiquitinated by USP9X. Post-translationally, O-glycosylated; contains O-GlcNAc. O-glycosylation by OGT prevents protein degradation by inhibiting ubiquitination. It also stabilizes the CLOCK-BMAL1 heterodimer thereby increasing CLOCK-BMAL1-mediated transcription of genes in the negative loop of the circadian clock such as PER1/2/3 and CRY1/2. Acetylated on Lys-538 by CLOCK during the repression phase of the circadian cycle. Acetylation facilitates recruitment of CRY1 protein and initiates the repression phase of the circadian cycle. Acetylated at Lys-538 by KAT5 during the activation phase of the cycle, leading to recruitment of the positive transcription elongation factor b (P-TEFb) and BRD4, followed by productive elongation of circadian transcripts. Deacetylated by SIRT1, which may result in decreased protein stability. In terms of processing, phosphorylated upon dimerization with CLOCK. Phosphorylation enhances the transcriptional activity, alters the subcellular localization and decreases the stability of the CLOCK-BMAL1 heterodimer by promoting its degradation. Phosphorylation shows circadian variations in the liver with a peak between CT10 to CT14. Phosphorylation at Ser-90 by CK2 is essential for its nuclear localization, its interaction with CLOCK and controls CLOCK nuclear entry. Dephosphorylation at Ser-78 is important for dimerization with CLOCK and transcriptional activity. Post-translationally, sumoylated on Lys-259 upon dimerization with CLOCK. Predominantly conjugated to poly-SUMO2/3 rather than SUMO1 and the level of these conjugates undergo rhythmic variation, peaking at CT9-CT12. Sumoylation localizes it exclusively to the PML body and promotes its ubiquitination in the PML body, ubiquitin-dependent proteasomal degradation and the transcriptional activity of the CLOCK-BMAL1 heterodimer. Undergoes lysosome-mediated degradation in a time-dependent manner in the liver.

It is found in the nucleus. Its subcellular location is the cytoplasm. The protein localises to the PML body. Transcriptional activator which forms a core component of the circadian clock. The circadian clock, an internal time-keeping system, regulates various physiological processes through the generation of approximately 24 hour circadian rhythms in gene expression, which are translated into rhythms in metabolism and behavior. It is derived from the Latin roots 'circa' (about) and 'diem' (day) and acts as an important regulator of a wide array of physiological functions including metabolism, sleep, body temperature, blood pressure, endocrine, immune, cardiovascular, and renal function. Consists of two major components: the central clock, residing in the suprachiasmatic nucleus (SCN) of the brain, and the peripheral clocks that are present in nearly every tissue and organ system. Both the central and peripheral clocks can be reset by environmental cues, also known as Zeitgebers (German for 'timegivers'). The predominant Zeitgeber for the central clock is light, which is sensed by retina and signals directly to the SCN. The central clock entrains the peripheral clocks through neuronal and hormonal signals, body temperature and feeding-related cues, aligning all clocks with the external light/dark cycle. Circadian rhythms allow an organism to achieve temporal homeostasis with its environment at the molecular level by regulating gene expression to create a peak of protein expression once every 24 hours to control when a particular physiological process is most active with respect to the solar day. Transcription and translation of core clock components (CLOCK, NPAS2, BMAL1, BMAL2, PER1, PER2, PER3, CRY1 and CRY2) plays a critical role in rhythm generation, whereas delays imposed by post-translational modifications (PTMs) are important for determining the period (tau) of the rhythms (tau refers to the period of a rhythm and is the length, in time, of one complete cycle). A diurnal rhythm is synchronized with the day/night cycle, while the ultradian and infradian rhythms have a period shorter and longer than 24 hours, respectively. Disruptions in the circadian rhythms contribute to the pathology of cardiovascular diseases, cancer, metabolic syndromes and aging. A transcription/translation feedback loop (TTFL) forms the core of the molecular circadian clock mechanism. Transcription factors, CLOCK or NPAS2 and BMAL1 or BMAL2, form the positive limb of the feedback loop, act in the form of a heterodimer and activate the transcription of core clock genes and clock-controlled genes (involved in key metabolic processes), harboring E-box elements (5'-CACGTG-3') within their promoters. The core clock genes: PER1/2/3 and CRY1/2 which are transcriptional repressors form the negative limb of the feedback loop and interact with the CLOCK|NPAS2-BMAL1|BMAL2 heterodimer inhibiting its activity and thereby negatively regulating their own expression. This heterodimer also activates nuclear receptors NR1D1/2 and RORA/B/G, which form a second feedback loop and which activate and repress BMAL1 transcription, respectively. BMAL1 positively regulates myogenesis and negatively regulates adipogenesis via the transcriptional control of the genes of the canonical Wnt signaling pathway. Plays a role in normal pancreatic beta-cell function; regulates glucose-stimulated insulin secretion via the regulation of antioxidant genes NFE2L2/NRF2 and its targets SESN2, PRDX3, CCLC and CCLM. Negatively regulates the mTORC1 signaling pathway; regulates the expression of MTOR and DEPTOR. Controls diurnal oscillations of Ly6C inflammatory monocytes; rhythmic recruitment of the PRC2 complex imparts diurnal variation to chemokine expression that is necessary to sustain Ly6C monocyte rhythms. Regulates the expression of HSD3B2, STAR, PTGS2, CYP11A1, CYP19A1 and LHCGR in the ovary and also the genes involved in hair growth. Plays an important role in adult hippocampal neurogenesis by regulating the timely entry of neural stem/progenitor cells (NSPCs) into the cell cycle and the number of cell divisions that take place prior to cell-cycle exit. Regulates the circadian expression of CIART and KLF11. The CLOCK-BMAL1 heterodimer regulates the circadian expression of SERPINE1/PAI1, VWF, B3, CCRN4L/NOC, NAMPT, DBP, MYOD1, PPARGC1A, PPARGC1B, SIRT1, GYS2, F7, NGFR, GNRHR, BHLHE40/DEC1, ATF4, MTA1, KLF10 and also genes implicated in glucose and lipid metabolism. Promotes rhythmic chromatin opening, regulating the DNA accessibility of other transcription factors. The NPAS2-BMAL1 heterodimer positively regulates the expression of MAOA, F7 and LDHA and modulates the circadian rhythm of daytime contrast sensitivity by regulating the rhythmic expression of adenylate cyclase type 1 (ADCY1) in the retina. The preferred binding motif for the CLOCK-BMAL1 heterodimer is 5'-CACGTGA-3', which contains a flanking adenine nucleotide at the 3-prime end of the canonical 6-nucleotide E-box sequence. CLOCK specifically binds to the half-site 5'-CAC-3', while BMAL1 binds to the half-site 5'-GTGA-3'. The CLOCK-BMAL1 heterodimer also recognizes the non-canonical E-box motifs 5'-AACGTGA-3' and 5'-CATGTGA-3'. Essential for the rhythmic interaction of CLOCK with ASS1 and plays a critical role in positively regulating CLOCK-mediated acetylation of ASS1. Plays a role in protecting against lethal sepsis by limiting the expression of immune checkpoint protein CD274 in macrophages in a PKM2-dependent manner. Regulates the diurnal rhythms of skeletal muscle metabolism via transcriptional activation of genes promoting triglyceride synthesis (DGAT2) and metabolic efficiency (COQ10B). The sequence is that of Basic helix-loop-helix ARNT-like protein 1 (BMAL1) from Mesocricetus auratus (Golden hamster).